Consider the following 342-residue polypeptide: scyllo-inositol 2-dehydrogenase (NAD(+)) (342 aa).

It belongs to the Gfo/Idh/MocA family.

It carries out the reaction scyllo-inositol + NAD(+) = scyllo-inosose + NADH + H(+). It functions in the pathway polyol metabolism. In terms of biological role, catalyzes the reversible NAD(+)-dependent oxidation of scyllo-inositol (SI) to 2,4,6/3,5-pentahydroxycyclohexanone (scyllo-inosose or SIS). Is required for SI catabolism that allows B.subtilis to utilize SI as the sole carbon source for growth. Cannot use NADP(+) instead of NAD(+). This chain is scyllo-inositol 2-dehydrogenase (NAD(+)), found in Bacillus subtilis (strain 168).